The following is a 505-amino-acid chain: ATP synthase subunit alpha, chloroplastic (505 aa).

Residue 170–177 (GDRQTGKT) coordinates ATP.

This sequence belongs to the ATPase alpha/beta chains family. As to quaternary structure, F-type ATPases have 2 components, CF(1) - the catalytic core - and CF(0) - the membrane proton channel. CF(1) has five subunits: alpha(3), beta(3), gamma(1), delta(1), epsilon(1). CF(0) has four main subunits: a, b, b' and c.

The protein localises to the plastid. It is found in the chloroplast thylakoid membrane. It catalyses the reaction ATP + H2O + 4 H(+)(in) = ADP + phosphate + 5 H(+)(out). Its function is as follows. Produces ATP from ADP in the presence of a proton gradient across the membrane. The alpha chain is a regulatory subunit. The sequence is that of ATP synthase subunit alpha, chloroplastic from Oenothera biennis (German evening primrose).